Consider the following 217-residue polypeptide: Ras-like protein (217 aa).

17–24 (GGGGVGKS) provides a ligand contact to GTP. The Effector region motif lies at 39-47 (YDPTIEDSY). GTP-binding positions include 64–68 (DTAGQ) and 123–126 (NKCD). Residues 181–200 (TGRMMTGGGGGGPPGTYAGK) form a disordered region. A compositionally biased stretch (gly residues) spans 185–194 (MTGGGGGGPP). 2 S-palmitoyl cysteine lipidation sites follow: C210 and C211. Residue C214 is modified to Cysteine methyl ester. C214 carries the S-geranylgeranyl cysteine lipid modification. A propeptide spans 215 to 217 (VVL) (removed in mature form).

This sequence belongs to the small GTPase superfamily. Ras family.

The protein resides in the cell membrane. The catalysed reaction is GTP + H2O = GDP + phosphate + H(+). Its activity is regulated as follows. Alternates between an inactive form bound to GDP and an active form bound to GTP. Activated by a guanine nucleotide-exchange factor (GEF) and inactivated by a GTPase-activating protein (GAP). The chain is Ras-like protein from Lentinula edodes (Shiitake mushroom).